Consider the following 603-residue polypeptide: Peroxisomal targeting signal receptor (603 aa).

Cys10 participates in a covalent cross-link: Glycyl cysteine thioester (Cys-Gly) (interchain with G-Cter in ubiquitin). Positions 11–33 (SANSNAIAQFNKHTQQDRSLQRQ) are amphipathic helix 1 (AH1). Lys22 is covalently cross-linked (Glycyl lysine isopeptide (Lys-Gly) (interchain with G-Cter in ubiquitin)). The tract at residues 23–49 (HTQQDRSLQRQAANQQGIVQNGQGFKK) is disordered. The segment covering 31–45 (QRQAANQQGIVQNGQ) has biased composition (polar residues). The interval 58-76 (RQNMDQFMNNGPSQSNFQF) is amphipathic helix 2 (AH2). Short sequence motifs (wxxxF/Y motif) lie at residues 99–103 (WTNEF), 128–132 (WATEF), and 192–196 (WDNQF). The segment at 232–248 (FQEVWDSLNSEEVENDF) is amphipathic helix 4 (AH4). The short motif at 271-275 (WEKDF) is the WxxxF/Y motif 4 element. 5 TPR repeats span residues 304–338 (ESDP…NEGH), 339–372 (INAW…HPEN), 449–482 (PDVQ…KPDD), 484–516 (VLWN…KPTF), and 518–550 (RARY…HQVE).

It belongs to the peroxisomal targeting signal receptor family. As to quaternary structure, interacts (via WxxxF/Y and LVxEF motifs) with PEX14; promoting translocation through the PEX13-PEX14 docking complex. Monoubiquitinated at Cys-10 by PEX2 during PEX5 passage through the retrotranslocation channel: monoubiquitination acts as a signal for PEX5 extraction and is required for proper export from peroxisomes and recycling. When PEX5 recycling is compromised, polyubiquitinated at Lys-22 by PEX10 during its passage through the retrotranslocation channel, leading to its degradation.

It localises to the cytoplasm. It is found in the cytosol. Its subcellular location is the peroxisome matrix. Functionally, receptor that mediates peroxisomal import of proteins containing a C-terminal PTS1-type tripeptide peroxisomal targeting signal (SKL-type). Binds to cargo proteins containing a PTS1 peroxisomal targeting signal in the cytosol, and translocates them into the peroxisome matrix by passing through the PEX13-PEX14 docking complex along with cargo proteins. PEX5 receptor is then retrotranslocated into the cytosol, leading to release of bound cargo in the peroxisome matrix, and reset for a subsequent peroxisome import cycle. The chain is Peroxisomal targeting signal receptor (PEX5) from Debaryomyces hansenii (strain ATCC 36239 / CBS 767 / BCRC 21394 / JCM 1990 / NBRC 0083 / IGC 2968) (Yeast).